The chain runs to 248 residues: tRNA pseudouridine synthase A (248 aa).

The Nucleophile role is filled by Asp53. Tyr111 provides a ligand contact to substrate.

The protein belongs to the tRNA pseudouridine synthase TruA family. Homodimer.

The catalysed reaction is uridine(38/39/40) in tRNA = pseudouridine(38/39/40) in tRNA. In terms of biological role, formation of pseudouridine at positions 38, 39 and 40 in the anticodon stem and loop of transfer RNAs. This is tRNA pseudouridine synthase A from Listeria innocua serovar 6a (strain ATCC BAA-680 / CLIP 11262).